A 137-amino-acid chain; its full sequence is UPF0146 protein MJ0688 (137 aa).

This sequence belongs to the UPF0146 family.

The chain is UPF0146 protein MJ0688 from Methanocaldococcus jannaschii (strain ATCC 43067 / DSM 2661 / JAL-1 / JCM 10045 / NBRC 100440) (Methanococcus jannaschii).